The chain runs to 219 residues: Thiamine-phosphate synthase (219 aa).

4-amino-2-methyl-5-(diphosphooxymethyl)pyrimidine contacts are provided by residues 44–48 (QFREK) and Asn-79. Mg(2+)-binding residues include Asp-80 and Asp-99. 4-amino-2-methyl-5-(diphosphooxymethyl)pyrimidine is bound at residue Ser-117. A 2-[(2R,5Z)-2-carboxy-4-methylthiazol-5(2H)-ylidene]ethyl phosphate-binding site is contributed by 143–145 (TST). Lys-146 is a binding site for 4-amino-2-methyl-5-(diphosphooxymethyl)pyrimidine. 2-[(2R,5Z)-2-carboxy-4-methylthiazol-5(2H)-ylidene]ethyl phosphate contacts are provided by residues Gly-175 and 195–196 (IS).

This sequence belongs to the thiamine-phosphate synthase family. Mg(2+) serves as cofactor.

It catalyses the reaction 2-[(2R,5Z)-2-carboxy-4-methylthiazol-5(2H)-ylidene]ethyl phosphate + 4-amino-2-methyl-5-(diphosphooxymethyl)pyrimidine + 2 H(+) = thiamine phosphate + CO2 + diphosphate. The enzyme catalyses 2-(2-carboxy-4-methylthiazol-5-yl)ethyl phosphate + 4-amino-2-methyl-5-(diphosphooxymethyl)pyrimidine + 2 H(+) = thiamine phosphate + CO2 + diphosphate. The catalysed reaction is 4-methyl-5-(2-phosphooxyethyl)-thiazole + 4-amino-2-methyl-5-(diphosphooxymethyl)pyrimidine + H(+) = thiamine phosphate + diphosphate. The protein operates within cofactor biosynthesis; thiamine diphosphate biosynthesis; thiamine phosphate from 4-amino-2-methyl-5-diphosphomethylpyrimidine and 4-methyl-5-(2-phosphoethyl)-thiazole: step 1/1. Functionally, condenses 4-methyl-5-(beta-hydroxyethyl)thiazole monophosphate (THZ-P) and 2-methyl-4-amino-5-hydroxymethyl pyrimidine pyrophosphate (HMP-PP) to form thiamine monophosphate (TMP). The chain is Thiamine-phosphate synthase from Bacillus cereus (strain ZK / E33L).